The following is a 388-amino-acid chain: 1-deoxy-D-xylulose 5-phosphate reductoisomerase (388 aa).

6 residues coordinate NADPH: Thr-10, Gly-11, Ser-12, Ile-13, Asn-37, and Asn-121. Lys-122 contributes to the 1-deoxy-D-xylulose 5-phosphate binding site. Glu-123 contacts NADPH. Asp-147 serves as a coordination point for Mn(2+). Residues Ser-148, Glu-149, Ser-173, and His-196 each coordinate 1-deoxy-D-xylulose 5-phosphate. Residue Glu-149 coordinates Mn(2+). Gly-202 provides a ligand contact to NADPH. Residues Ser-209, Asn-214, Lys-215, and Glu-218 each contribute to the 1-deoxy-D-xylulose 5-phosphate site. Glu-218 contributes to the Mn(2+) binding site.

Belongs to the DXR family. The cofactor is Mg(2+). It depends on Mn(2+) as a cofactor.

It catalyses the reaction 2-C-methyl-D-erythritol 4-phosphate + NADP(+) = 1-deoxy-D-xylulose 5-phosphate + NADPH + H(+). It participates in isoprenoid biosynthesis; isopentenyl diphosphate biosynthesis via DXP pathway; isopentenyl diphosphate from 1-deoxy-D-xylulose 5-phosphate: step 1/6. Functionally, catalyzes the NADPH-dependent rearrangement and reduction of 1-deoxy-D-xylulose-5-phosphate (DXP) to 2-C-methyl-D-erythritol 4-phosphate (MEP). The sequence is that of 1-deoxy-D-xylulose 5-phosphate reductoisomerase from Lachnoclostridium phytofermentans (strain ATCC 700394 / DSM 18823 / ISDg) (Clostridium phytofermentans).